Consider the following 1178-residue polypeptide: MFELNNFDALQIGLASPEKIREWSRGEVKKPETINYRTLKPERDGLFCERIFGPMKDWECHCGKYKRIRYKGIVCDRCGVEVTKAKVRRERMGHIELAAPVSHIWYFKGIPSRMGLILDMSPRALEKVLYFASYVVLDPKETPLLKKQLLNEKEYRESIDKYGDDSFVAAMGAEAVKTLLDEIDLEQSSIELKEELKTSTGQKKIRIIRRLEVVESFRKSGNRPDWMVIDVIPVIPPDLRPMVQLDGGRFATSDLNDLYRRVINRNNRLKKLLDLGAPDIIVRNEKRMLQEAVDALIDNGRRGRPVTGPGNRPLKSLSDMLKGKQGRFRQNLLGKRVDYSGRSVIVVGPELKMYQCGLPKEMALELFKPFVMKKLVQNGLAHNIKSAKRMVERVQPQVWDVLEEVISDHPVLLNRAPTLHRLGIQAFQPVLVEGRAIKLHPLVCTAYNADFDGDQMAVHVPLSVEAQAEARFLMLAAHNILKPSDGKPVSVPTQDMVLGSYYLTMDKDGVKGEGKVFSCPEEVLMAYQCKAVDIHAKIKVRLKKVIDGETIEGIIETTPGKIIFNESIPQDLGYIDRTIPENKLKLEVDFLVSKKTLGGIITKCYMKHGATKTSIMLDKIKAKGYHYSTIGAITISTSDMVVPESKRELLENTEKQVEKIQKMYRRGFISEEERYEKVIDLWTKTTEDVANALMESLDSFNPIYMMADSGARGSKSQIKQLAGMRGLMANPSGKILELPIKASFREGLDVLEYFISTHGARKGNADTALKTADSGYLTRRLVDVSQDVIVRQEDCGTEEGYEVSEIKEGNEVIEPLVERLSGRYPSEDIIHPTTGEVIVKRNTYMDEDIAQKVSDAGIKKVKIRSVFTCKSKHGVCARCYGMNMGTSQKIHIGEAVGIVAAQSIGEPGTQLTMRTFHTGGVAGADITQGLPRVEELFEARKPKGLAIVSEVSGTVKMEETKKKRTIIVVTDDGEEVSYDIPFGSRIKVKNGDIISAGDEITEGSINPHDILRIKGVDGVKNYLLSEVQKVYRLQGVDINDKHLEVVIRQMTRKIKIEDSGDTELLPGTMIDVFDFEEANREILEKGGEPAVGRIALLGITKAALATDSFLSAASFQETTRVLTDAAIKGKIDPLLGLKENVIIGKLIPAGTGMTRYRSIQINTDDENIEEDSMDSMEV.

4 residues coordinate Zn(2+): C60, C62, C75, and C78. D450, D452, and D454 together coordinate Mg(2+). Zn(2+)-binding residues include C795, C869, C876, and C879.

This sequence belongs to the RNA polymerase beta' chain family. As to quaternary structure, the RNAP catalytic core consists of 2 alpha, 1 beta, 1 beta' and 1 omega subunit. When a sigma factor is associated with the core the holoenzyme is formed, which can initiate transcription. Requires Mg(2+) as cofactor. Zn(2+) serves as cofactor.

It carries out the reaction RNA(n) + a ribonucleoside 5'-triphosphate = RNA(n+1) + diphosphate. Its function is as follows. DNA-dependent RNA polymerase catalyzes the transcription of DNA into RNA using the four ribonucleoside triphosphates as substrates. This chain is DNA-directed RNA polymerase subunit beta', found in Clostridium botulinum (strain Langeland / NCTC 10281 / Type F).